A 316-amino-acid polypeptide reads, in one-letter code: Ribose-phosphate pyrophosphokinase (316 aa).

Residues 42 to 44 and 101 to 102 contribute to the ATP site; these read DGE and RQ. Residues His135 and Asp174 each contribute to the Mg(2+) site. The active site involves Lys197. D-ribose 5-phosphate contacts are provided by residues Arg199, Asp223, and 227 to 231; that span reads DTAGT.

The protein belongs to the ribose-phosphate pyrophosphokinase family. Class I subfamily. Homohexamer. Mg(2+) serves as cofactor.

It is found in the cytoplasm. It catalyses the reaction D-ribose 5-phosphate + ATP = 5-phospho-alpha-D-ribose 1-diphosphate + AMP + H(+). The protein operates within metabolic intermediate biosynthesis; 5-phospho-alpha-D-ribose 1-diphosphate biosynthesis; 5-phospho-alpha-D-ribose 1-diphosphate from D-ribose 5-phosphate (route I): step 1/1. Its function is as follows. Involved in the biosynthesis of the central metabolite phospho-alpha-D-ribosyl-1-pyrophosphate (PRPP) via the transfer of pyrophosphoryl group from ATP to 1-hydroxyl of ribose-5-phosphate (Rib-5-P). The polypeptide is Ribose-phosphate pyrophosphokinase (Halalkalibacterium halodurans (strain ATCC BAA-125 / DSM 18197 / FERM 7344 / JCM 9153 / C-125) (Bacillus halodurans)).